Here is a 432-residue protein sequence, read N- to C-terminus: Glutamyl-tRNA reductase (432 aa).

Residues 55-58 (TCNR), S114, 119-121 (ETQ), and Q125 each bind substrate. C56 acts as the Nucleophile in catalysis. 194 to 199 (GAGEMI) contacts NADP(+).

Belongs to the glutamyl-tRNA reductase family. As to quaternary structure, homodimer.

It catalyses the reaction (S)-4-amino-5-oxopentanoate + tRNA(Glu) + NADP(+) = L-glutamyl-tRNA(Glu) + NADPH + H(+). The protein operates within porphyrin-containing compound metabolism; protoporphyrin-IX biosynthesis; 5-aminolevulinate from L-glutamyl-tRNA(Glu): step 1/2. Catalyzes the NADPH-dependent reduction of glutamyl-tRNA(Glu) to glutamate 1-semialdehyde (GSA). This Burkholderia cenocepacia (strain ATCC BAA-245 / DSM 16553 / LMG 16656 / NCTC 13227 / J2315 / CF5610) (Burkholderia cepacia (strain J2315)) protein is Glutamyl-tRNA reductase.